The following is a 168-amino-acid chain: Peptide deformylase (168 aa).

Fe cation contacts are provided by C92 and H134. E135 is an active-site residue. H138 is a Fe cation binding site.

This sequence belongs to the polypeptide deformylase family. The cofactor is Fe(2+).

The enzyme catalyses N-terminal N-formyl-L-methionyl-[peptide] + H2O = N-terminal L-methionyl-[peptide] + formate. Removes the formyl group from the N-terminal Met of newly synthesized proteins. Requires at least a dipeptide for an efficient rate of reaction. N-terminal L-methionine is a prerequisite for activity but the enzyme has broad specificity at other positions. The chain is Peptide deformylase from Azotobacter vinelandii (strain DJ / ATCC BAA-1303).